A 344-amino-acid chain; its full sequence is MMVIRPVERRDVSALMQLASKTGGGLTSLPADEATLTSRIERALKTWRGELPKSEQGYVFVLEDSDTGSVAGICAIEVAVGLNDPWYNYRVGTLVHASKELNVYNALPTLFLSNDHTGSSELCTLFLDPDWRKEGNGYLLSKSRFMFMAAFRDKFNEKVVAEMRGVIDEHGYSPFWESLGERFFSMEFSRADYLCGTGQKAFIAELMPKHPIYTHFLSEEAQAVIGEVHPQTAPARTVLEKEGFRYRNYIDIFDGGPTLECDIDRVRAIRKSRLLDVVEGQPAPGEFPACLVANENYHHFRAMLIRTDPDTQRLVLTAAQLDALKCHAGDRVRLVRLCAEEKTA.

Residue L125 participates in succinyl-CoA binding. H229 (proton donor) is an active-site residue.

It belongs to the arginine N-succinyltransferase family.

The catalysed reaction is succinyl-CoA + L-arginine = N(2)-succinyl-L-arginine + CoA + H(+). Its pathway is amino-acid degradation; L-arginine degradation via AST pathway; L-glutamate and succinate from L-arginine: step 1/5. In terms of biological role, catalyzes the transfer of succinyl-CoA to arginine to produce N(2)-succinylarginine. This chain is Arginine N-succinyltransferase, found in Citrobacter koseri (strain ATCC BAA-895 / CDC 4225-83 / SGSC4696).